A 189-amino-acid chain; its full sequence is Elongation factor P (189 aa).

The protein belongs to the elongation factor P family.

It is found in the cytoplasm. The protein operates within protein biosynthesis; polypeptide chain elongation. Involved in peptide bond synthesis. Stimulates efficient translation and peptide-bond synthesis on native or reconstituted 70S ribosomes in vitro. Probably functions indirectly by altering the affinity of the ribosome for aminoacyl-tRNA, thus increasing their reactivity as acceptors for peptidyl transferase. The chain is Elongation factor P from Ehrlichia ruminantium (strain Gardel).